The following is a 633-amino-acid chain: GTPase-GDP dissociation stimulator BEM4 (633 aa).

As to quaternary structure, interacts with CDC42; the interaction is direct. Interacts with RHO1; the interaction is direct. Interacts with RHO2. Interacts with RHO4. Interacts with CDC11.

The protein resides in the nucleus. It localises to the cytoplasm. Its function is as follows. Probably acts as a GEF (guanine nucleotide exchange factor) for the Rho family of small GTP-binding proteins (G proteins) that stimulates the dissociation of GDP to enable subsequent binding of GTP. May also chaperone the processing and/or trafficking of small GTPases independently of GEF activity. Involved in the control of polarized cell growth via CDC42-mediated signaling. Involved in the control of cell-wall organization via RHO1-mediated signaling. May also function via RHO2 and RHO4. This Saccharomyces cerevisiae (strain ATCC 204508 / S288c) (Baker's yeast) protein is GTPase-GDP dissociation stimulator BEM4.